A 494-amino-acid polypeptide reads, in one-letter code: Gram-negative bacteria-binding protein 1 (494 aa).

The signal sequence occupies residues methionine 1–alanine 19. Residues tyrosine 20 to glycine 120 form the CBM39 domain. N-linked (GlcNAc...) asparagine glycans are attached at residues asparagine 56 and asparagine 81. Residues glycine 126–serine 160 are disordered. The region spanning threonine 135–asparagine 494 is the GH16 domain. A glycan (N-linked (GlcNAc...) asparagine) is linked at asparagine 185.

It belongs to the insect beta-1,3-glucan binding protein family.

It localises to the cell membrane. Functionally, plays a key role in innate immunity by acting as a pattern recognition receptor for beta-1,3-glucan from fungi and lipopolysaccharide from Gram-negative bacteria. Upon recognition of invading microorganism-derived products, acts upstream of protease spz processing enzyme SPE to activate the Toll pathway and to induce the expression of antimicrobial peptides drosomycin, cecropin and attacin. In Drosophila melanogaster (Fruit fly), this protein is Gram-negative bacteria-binding protein 1.